The following is a 144-amino-acid chain: Large ribosomal subunit protein uL16 (144 aa).

A compositionally biased stretch (basic residues) spans 1–19; that stretch reads MLLPKRVKYRRQHRPKTTG. The tract at residues 1–23 is disordered; that stretch reads MLLPKRVKYRRQHRPKTTGRSKG.

Belongs to the universal ribosomal protein uL16 family. In terms of assembly, part of the 50S ribosomal subunit.

Functionally, binds 23S rRNA and is also seen to make contacts with the A and possibly P site tRNAs. This Staphylococcus aureus (strain Mu50 / ATCC 700699) protein is Large ribosomal subunit protein uL16.